The sequence spans 1706 residues: MEAKVPRPRGRPRKRQRLEDDNRKLNNRGKKQVLEVEPAVPISLLGCYMLKDFDDNEVFLGKIVSYDTGLYRVIYEDGDCEELESGDLRRLIISDSYLDDELRVRRKKLDKLILKKEEKKKRNSPENKAVELPNQVNGVQARAVTNSEDGDSYSDSESSESGDKRGSDLEIEAPLVPPVDLPPSSGTIGIPEEAVAHLLSVYGFLRSFSFQLYICPFELNDFVGALYFSGPNSLLDAVHVALLRALKGHLERLSSSKSVLASKCLRCIDWSLLDVLTWPVYLVQYFTAMGHASGPQWNIFNKFVVEIEYYSLPIGMKLKILQILCDDIFDVADLRDEIDAREESEIGFDPDRVATGLLENVPRRVHPRFAKTSAYKEKEVTDSSTNESKDLDSRCTNGGSNEVSSDLDGNSDECRICGMDGTLLCCDGCPLAYHSRCIGVVKMYIPDGPWFCPECTINKKGPKIAHGTSLRGAVQFGMDPHGRLFLGTCNHLLVLNISVNGDAVVKYYNVNDISKVVLVLISASSHTLEYVEICKAITQYWDLPEGISLREGEIGLTQAKDREDGKVSEITKSDSANISNRSHTQTVFDLPTSTLGNTNSAVTGGSCGIQGKKLAARVTYLGLSFKPNTYNNHYTNGELAVSAAASLAVLSSEETHEPDLRKYNSAKKAASSNILEQMKAFSLVAPRFFWPSPDKKEITRERCGWCHSCRLTSASRRGCMLNAAVAGATKGAMKIFSGLFPLKNGEGVLSSIAAYILYLEESLRGLIAGPFLSESPRKQWRKQVEEASTCKALKAPLLELEENICSIALSCDWFKQMDDWLIEHSIFQSAPVTLGVPQRRGPGRTKQNTQAEVTAEGSDADSFTWWRGGKLSKVILLKAVLSQPATKKAAWQGGSKKIPGLNYGDASYIPRRSRRSFWKAAVESSKNISQLALQVRYLDMSLRWRELVRPDQNLQNVKGPETDVAIFRNARICDKKLSDNKVSYGVFFGNQKHLPSRVMKNIMEVEKTQDRNEKYWLQEAHVPLYLIKEFEESLHRVQMPSSTKKPSKKLSKLQRKQLKASLMDIFSYIASRRDKMEKCSCASCDHDVLLRDTTTCSSCHGFCHKDCTSMSQHTNGNVEVLVTCKRCYLSKTRVPTNINHRQSTAPQFTINVRHQNAVIPVIKVKPPSQQLSSQKPRENTSGVKQVTPDSSVSKSKQKTLSCGVIWRKKNVEDTGVDFRNQNILLAGRSDKPSLEPVCGICLLPYNPGLTYIHCTKCEKWFHTEAVKLKDSQIPEVVGFKCCKCRRIRSPDCPYMDPKLKEQKQIKRIVFTNQKQRQGNSGLDSDSERMSEQKDSKPSTPLPATPLYPPDDVFIPEDDPLLVSVSKVKQITPSSFDLEWSTTAFAPGPQKLPVRRQVKREDSDAAYPELHPIVKPEAEEQALPVLTEWDLSGELLFDYEDMEFEPQTYFSLTELLTADDSGGGQYQENGDMVVSGNPQFEPTEKEECEDDMGPCQRCLQMDPAPDLLCTVCGLLIHSHCSPWSALPGSSWSCGQCRIRALGSITLGSFGAITQFKSILPDRSTKVDISLAGPFAGAALSVSMFAVGLFLSTEPDAANDLVQVPSMLFQGSLLLGLISRATLGYAALHAATVSIHPLVIAGWCGLTTTAFNMLPVGCLDGGRAVQGAFGKNALVTFGLSTYVMLGLRVLGGPLALPWGLYVLICRNT.

Residues 1–16 (MEAKVPRPRGRPRKRQ) are compositionally biased toward basic residues. Disordered stretches follow at residues 1–27 (MEAKVPRPRGRPRKRQRLEDDNRKLNN) and 144–168 (VTNSEDGDSYSDSESSESGDKRGSD). The Nuclear localization signal motif lies at 9–18 (RGRPRKRQRL). Positions 148–160 (EDGDSYSDSESSE) are enriched in acidic residues. The 61-residue stretch at 192-252 (EEAVAHLLSV…LRALKGHLER (61 aa)) folds into the DDT domain. Residues 375 to 393 (YKEKEVTDSSTNESKDLDS) show a composition bias toward basic and acidic residues. The interval 375–408 (YKEKEVTDSSTNESKDLDSRCTNGGSNEVSSDLD) is disordered. Over residues 394 to 408 (RCTNGGSNEVSSDLD) the composition is skewed to polar residues. The PHD-type 1 zinc finger occupies 411–458 (SDECRICGMDGTLLCCDGCPLAYHSRCIGVVKMYIPDGPWFCPECTIN). Disordered stretches follow at residues 1165–1194 (KPPSQQLSSQKPRENTSGVKQVTPDSSVSK) and 1311–1345 (TNQKQRQGNSGLDSDSERMSEQKDSKPSTPLPATP). Polar residues-rich tracts occupy residues 1167–1194 (PSQQLSSQKPRENTSGVKQVTPDSSVSK) and 1311–1323 (TNQKQRQGNSGLD). Positions 1325–1336 (DSERMSEQKDSK) are enriched in basic and acidic residues. Transmembrane regions (helical) follow at residues 1539-1559 (ALGSITLGSFGAITQFKSILP), 1569-1589 (LAGPFAGAALSVSMFAVGLFL), 1596-1616 (ANDLVQVPSMLFQGSLLLGLI), 1624-1644 (AALHAATVSIHPLVIAGWCGL), and 1682-1702 (MLGLRVLGGPLALPWGLYVLI).

As to quaternary structure, interacts (via the DDT domain) with CHR11 (via C-terminus).

It is found in the plastid. The protein resides in the chloroplast outer membrane. The protein localises to the nucleus. Its function is as follows. Membrane-bound transcription factor required for the plastid-to-nucleus retrograde signaling. Functions in multiple retrograde pathways. The plastid-to-nucleus signal plays an important role in the coordinated expression of both nuclear- and chloroplast-localized genes that encode photosynthesis-related proteins. In the nucleus, activates ABI4 transcription in a PHD-dependent manner associated with histone modifications. Localized primarily in the chloroplast outer membrane as dormant form and, in response to retrograde signals, is released from the membrane through proteolytic cleavage and its cleaved fragment containing the transcription factor domain is redistributed to the nucleus, where it regulates the expression of particular nuclear genes. The polypeptide is DDT domain-containing protein PTM (Arabidopsis thaliana (Mouse-ear cress)).